Reading from the N-terminus, the 494-residue chain is Adenosylhomocysteinase (494 aa).

The substrate site is built by T72, D155, and E217. 218–220 lines the NAD(+) pocket; it reads TTT. The substrate site is built by K247 and D251. NAD(+)-binding positions include N252, 281 to 286, E304, N339, 360 to 362, and N408; these read GYGDVG and IGH.

This sequence belongs to the adenosylhomocysteinase family. Requires NAD(+) as cofactor.

The protein resides in the cytoplasm. It catalyses the reaction S-adenosyl-L-homocysteine + H2O = L-homocysteine + adenosine. The protein operates within amino-acid biosynthesis; L-homocysteine biosynthesis; L-homocysteine from S-adenosyl-L-homocysteine: step 1/1. Functionally, may play a key role in the regulation of the intracellular concentration of adenosylhomocysteine. The protein is Adenosylhomocysteinase of Nocardia farcinica (strain IFM 10152).